Consider the following 320-residue polypeptide: Probable NAD(P)H-dependent D-xylose reductase xyl1 (320 aa).

Tyr-50 serves as the catalytic Proton donor. Residue His-112 coordinates substrate. NAD(+) is bound by residues 167–168 (SN), 216–225 (SSFGPLSFLE), and 272–282 (KSNNPTRLSQN).

It belongs to the aldo/keto reductase family.

It catalyses the reaction xylitol + NAD(+) = D-xylose + NADH + H(+). It carries out the reaction xylitol + NADP(+) = D-xylose + NADPH + H(+). It participates in carbohydrate metabolism; D-xylose degradation. Its function is as follows. Catalyzes the initial reaction in the xylose utilization pathway by reducing D-xylose into xylitol. Xylose is a major component of hemicelluloses such as xylan. Most fungi utilize D-xylose via three enzymatic reactions, xylose reductase (XR), xylitol dehydrogenase (XDH), and xylulokinase, to form xylulose 5-phosphate, which enters pentose phosphate pathway. The sequence is that of Probable NAD(P)H-dependent D-xylose reductase xyl1 (xyl1) from Aspergillus terreus (strain NIH 2624 / FGSC A1156).